The sequence spans 338 residues: Phytanoyl-CoA dioxygenase, peroxisomal (338 aa).

The N-terminal 30 residues, 1–30, are a transit peptide targeting the peroxisome; that stretch reads MEQLRAAARLQIVLGHLGRPSAGAVVAHPT. N6-succinyllysine is present on residues Lys-59 and Lys-108. Residues Lys-120, Met-157, 175-177, and Trp-193 each bind 2-oxoglutarate; that span reads HQD. The Fe cation site is built by His-175 and Asp-177. N6-succinyllysine occurs at positions 231 and 252. Residue His-264 coordinates Fe cation. 2-oxoglutarate contacts are provided by Ser-266 and Arg-275. Phosphoserine is present on Ser-317.

The protein belongs to the PhyH family. In terms of assembly, interacts with FKBP52. Interacts with PHYHIP. Fe cation is required as a cofactor. Requires L-ascorbate as cofactor. The cofactor is ATP. Mg(2+) serves as cofactor. Expressed in liver, kidney, and T-cells, but not in spleen, brain, heart, lung and skeletal muscle.

It is found in the peroxisome. It catalyses the reaction phytanoyl-CoA + 2-oxoglutarate + O2 = 2-hydroxyphytanoyl-CoA + succinate + CO2. The enzyme catalyses 3-methylhexadecanoyl-CoA + 2-oxoglutarate + O2 = 2-hydroxy-3-methylhexadecanoyl-CoA + succinate + CO2. The catalysed reaction is hexadecanoyl-CoA + 2-oxoglutarate + O2 = 2-hydroxyhexadecanoyl-CoA + succinate + CO2. It carries out the reaction octanoyl-CoA + 2-oxoglutarate + O2 = 2-hydroxyoctanoyl-CoA + succinate + CO2. It catalyses the reaction decanoyl-CoA + 2-oxoglutarate + O2 = 2-hydroxydecanoyl-CoA + succinate + CO2. The enzyme catalyses 3-methylbutanoyl-CoA + 2-oxoglutarate + O2 = 2-hydroxy-3-methylbutanoyl-CoA + succinate + CO2. The catalysed reaction is heptadecanoyl-CoA + 2-oxoglutarate + O2 = 2-hydroxyheptadecanoyl-CoA + succinate + CO2. It carries out the reaction eicosanoyl-CoA + 2-oxoglutarate + O2 = 2-hydroxyeicosanoyl-CoA + succinate + CO2. It catalyses the reaction octadecanoyl-CoA + 2-oxoglutarate + O2 = 2-hydroxyoctadecanoyl-CoA + succinate + CO2. The enzyme catalyses dodecanoyl-CoA + 2-oxoglutarate + O2 = 2-hydroxydodecanoyl-CoA + succinate + CO2. The catalysed reaction is tetradecanoyl-CoA + 2-oxoglutarate + O2 = 2-hydroxytetradecanoyl-CoA + succinate + CO2. It carries out the reaction hexanoyl-CoA + 2-oxoglutarate + O2 = 2-hydroxyhexanoyl-CoA + succinate + CO2. It catalyses the reaction butanoyl-CoA + 2-oxoglutarate + O2 = 2-hydroxybutanoyl-CoA + succinate + CO2. The enzyme catalyses 3-methylnonanoyl-CoA + 2-oxoglutarate + O2 = 2-hydroxy-3-methylnonanoyl-CoA + succinate + CO2. The catalysed reaction is 3-methylundecanoyl-CoA + 2-oxoglutarate + O2 = 2-hydroxy-3-methylundecanoyl-CoA + succinate + CO2. It carries out the reaction 3-methyldodecanoyl-CoA + 2-oxoglutarate + O2 = 2-hydroxy-3-methyldodecanoyl-CoA + succinate + CO2. Its pathway is lipid metabolism; fatty acid metabolism. In terms of biological role, catalyzes the 2-hydroxylation of not only racemic phytanoyl-CoA and the isomers of 3-methylhexadecanoyl-CoA, but also a variety of other mono-branched 3-methylacyl-CoA esters (with a chain length of at least seven carbon atoms) and straight-chain acyl-CoA esters (with a chain length longer than four carbon atoms). Does not hydroxylate long and very long straight chain acyl-CoAs or 2-methyl- and 4-methyl-branched acyl-CoAs. The sequence is that of Phytanoyl-CoA dioxygenase, peroxisomal (PHYH) from Homo sapiens (Human).